Here is a 961-residue protein sequence, read N- to C-terminus: Aconitate hydratase A (961 aa).

The [4Fe-4S] cluster site is built by C499, C565, and C568.

It belongs to the aconitase/IPM isomerase family. In terms of assembly, monomer. It depends on [4Fe-4S] cluster as a cofactor.

The catalysed reaction is citrate = D-threo-isocitrate. It catalyses the reaction (2S,3R)-3-hydroxybutane-1,2,3-tricarboxylate = 2-methyl-cis-aconitate + H2O. The protein operates within carbohydrate metabolism; tricarboxylic acid cycle; isocitrate from oxaloacetate: step 2/2. It participates in organic acid metabolism; propanoate degradation. Its function is as follows. Involved in the catabolism of short chain fatty acids (SCFA) via the tricarboxylic acid (TCA)(acetyl degradation route) and probably via the 2-methylcitrate cycle I (propionate degradation route). Catalyzes the reversible isomerization of citrate to isocitrate via cis-aconitate. The apo form of AcnA functions as a RNA-binding regulatory protein. Could catalyze the hydration of 2-methyl-cis-aconitate to yield (2R,3S)-2-methylisocitrate. The polypeptide is Aconitate hydratase A (acn) (Mycobacterium avium).